Reading from the N-terminus, the 240-residue chain is UDP-2,3-diacylglucosamine hydrolase (240 aa).

Mn(2+) contacts are provided by Asp7, His9, Asp40, Asn78, and His113. Asn78–Arg79 is a substrate binding site. Substrate-binding residues include Asp121, Ser159, Thr163, Lys166, and His194. Residues His194 and His196 each contribute to the Mn(2+) site.

Belongs to the LpxH family. Requires Mn(2+) as cofactor.

It localises to the cell inner membrane. The catalysed reaction is UDP-2-N,3-O-bis[(3R)-3-hydroxytetradecanoyl]-alpha-D-glucosamine + H2O = 2-N,3-O-bis[(3R)-3-hydroxytetradecanoyl]-alpha-D-glucosaminyl 1-phosphate + UMP + 2 H(+). It functions in the pathway glycolipid biosynthesis; lipid IV(A) biosynthesis; lipid IV(A) from (3R)-3-hydroxytetradecanoyl-[acyl-carrier-protein] and UDP-N-acetyl-alpha-D-glucosamine: step 4/6. Its function is as follows. Hydrolyzes the pyrophosphate bond of UDP-2,3-diacylglucosamine to yield 2,3-diacylglucosamine 1-phosphate (lipid X) and UMP by catalyzing the attack of water at the alpha-P atom. Involved in the biosynthesis of lipid A, a phosphorylated glycolipid that anchors the lipopolysaccharide to the outer membrane of the cell. The sequence is that of UDP-2,3-diacylglucosamine hydrolase from Pseudomonas putida (strain W619).